A 247-amino-acid chain; its full sequence is ATP synthase subunit a, chloroplastic (247 aa).

Transmembrane regions (helical) follow at residues 38–58, 95–115, 134–154, 199–219, and 220–240; these read QVLI…IIAV, VPFI…GALL, INTT…AGLS, LVVV…VMFL, and GLFT…AYIG.

It belongs to the ATPase A chain family. F-type ATPases have 2 components, CF(1) - the catalytic core - and CF(0) - the membrane proton channel. CF(1) has five subunits: alpha(3), beta(3), gamma(1), delta(1), epsilon(1). CF(0) has four main subunits: a, b, b' and c.

The protein resides in the plastid. Its subcellular location is the chloroplast thylakoid membrane. Its function is as follows. Key component of the proton channel; it plays a direct role in the translocation of protons across the membrane. This Cucumis sativus (Cucumber) protein is ATP synthase subunit a, chloroplastic.